The following is a 96-amino-acid chain: MIDAAQLDHLAQLARLHLKPEEREAMTADLNSILGYFEQLREVNTDGVEEMQRPVNLVNVLRDDVPGEVFAPEVVEALAPEMHGGQIRVPRTVEAD.

This sequence belongs to the GatC family. As to quaternary structure, heterotrimer of A, B and C subunits.

The enzyme catalyses L-glutamyl-tRNA(Gln) + L-glutamine + ATP + H2O = L-glutaminyl-tRNA(Gln) + L-glutamate + ADP + phosphate + H(+). It carries out the reaction L-aspartyl-tRNA(Asn) + L-glutamine + ATP + H2O = L-asparaginyl-tRNA(Asn) + L-glutamate + ADP + phosphate + 2 H(+). Functionally, allows the formation of correctly charged Asn-tRNA(Asn) or Gln-tRNA(Gln) through the transamidation of misacylated Asp-tRNA(Asn) or Glu-tRNA(Gln) in organisms which lack either or both of asparaginyl-tRNA or glutaminyl-tRNA synthetases. The reaction takes place in the presence of glutamine and ATP through an activated phospho-Asp-tRNA(Asn) or phospho-Glu-tRNA(Gln). The polypeptide is Aspartyl/glutamyl-tRNA(Asn/Gln) amidotransferase subunit C (Deinococcus deserti (strain DSM 17065 / CIP 109153 / LMG 22923 / VCD115)).